We begin with the raw amino-acid sequence, 916 residues long: Translation initiation factor IF-2 (916 aa).

Residues 151 to 191 (NLDEQQRLAESDRARDEAIQRKRDEEQAAKDRVEAERKAAE) are compositionally biased toward basic and acidic residues. 2 disordered regions span residues 151-262 (NLDE…SHVM) and 280-328 (HLSA…ERPT). 2 stretches are compositionally biased toward low complexity: residues 192–243 (EAAA…ATPA) and 293–305 (RGKPTGRPGSSSS). Residues 415–584 (SRPPVVTIMG…SLQAEVLELK (170 aa)) enclose the tr-type G domain. A G1 region spans residues 424 to 431 (GHVDHGKT). Position 424–431 (424–431 (GHVDHGKT)) interacts with GTP. The tract at residues 449 to 453 (GITQH) is G2. Residues 470 to 473 (DTPG) are G3. GTP contacts are provided by residues 470 to 474 (DTPGH) and 524 to 527 (NKID). The tract at residues 524–527 (NKID) is G4. Positions 560–562 (SAK) are G5.

Belongs to the TRAFAC class translation factor GTPase superfamily. Classic translation factor GTPase family. IF-2 subfamily.

It localises to the cytoplasm. Its function is as follows. One of the essential components for the initiation of protein synthesis. Protects formylmethionyl-tRNA from spontaneous hydrolysis and promotes its binding to the 30S ribosomal subunits. Also involved in the hydrolysis of GTP during the formation of the 70S ribosomal complex. The polypeptide is Translation initiation factor IF-2 (Xanthomonas campestris pv. campestris (strain ATCC 33913 / DSM 3586 / NCPPB 528 / LMG 568 / P 25)).